The primary structure comprises 308 residues: Ribosomal RNA large subunit methyltransferase F (308 aa).

Belongs to the methyltransferase superfamily. METTL16/RlmF family.

It localises to the cytoplasm. The catalysed reaction is adenosine(1618) in 23S rRNA + S-adenosyl-L-methionine = N(6)-methyladenosine(1618) in 23S rRNA + S-adenosyl-L-homocysteine + H(+). In terms of biological role, specifically methylates the adenine in position 1618 of 23S rRNA. In Salmonella schwarzengrund (strain CVM19633), this protein is Ribosomal RNA large subunit methyltransferase F.